A 173-amino-acid polypeptide reads, in one-letter code: RNA pyrophosphohydrolase (173 aa).

One can recognise a Nudix hydrolase domain in the interval 6–149; that stretch reads GFRANVGIII…KRDVYRKVMK (144 aa). A Nudix box motif is present at residues 38-59; it reads GGVDDGETPEEAMYRELYEEVG.

The protein belongs to the Nudix hydrolase family. RppH subfamily. A divalent metal cation is required as a cofactor.

Its function is as follows. Accelerates the degradation of transcripts by removing pyrophosphate from the 5'-end of triphosphorylated RNA, leading to a more labile monophosphorylated state that can stimulate subsequent ribonuclease cleavage. The chain is RNA pyrophosphohydrolase from Shewanella woodyi (strain ATCC 51908 / MS32).